We begin with the raw amino-acid sequence, 282 residues long: Elongation factor Ts (282 aa).

Residues 80 to 83 (TDFV) form an involved in Mg(2+) ion dislocation from EF-Tu region.

This sequence belongs to the EF-Ts family.

Its subcellular location is the cytoplasm. Its function is as follows. Associates with the EF-Tu.GDP complex and induces the exchange of GDP to GTP. It remains bound to the aminoacyl-tRNA.EF-Tu.GTP complex up to the GTP hydrolysis stage on the ribosome. This Chlamydia pneumoniae (Chlamydophila pneumoniae) protein is Elongation factor Ts (tsf).